A 284-amino-acid polypeptide reads, in one-letter code: MVLMIVSGRSGSGKSVALRALEDMGFYCVDNLPIILLPNLASSLMPRNTPAAISIDVRNMPGSSEIFEKVLTKLNKKFSTRLIFLDANHNTLIQRYSETRRLHPLSGNHLSLEKAIDEENILLEPLRSRADLIINTSEMSVHQLSEMLRVRSLGTKERKLSMVFESFGFKYGLPIYADYVFDVRFLPNPHWDPKLRSMTGLDKPVVDFLKRHSEVHHFIYQTLHYLNQWLPMLENNDRSYLTIAIGCTGGKHRSVYIAEQLADYFRSRGKNVQLRHRTLEKRKE.

Position 8 to 15 (8 to 15 (GRSGSGKS)) interacts with ATP. 56–59 (DVRN) is a GTP binding site. The tract at residues 266–284 (RSRGKNVQLRHRTLEKRKE) is RNA-binding.

The protein belongs to the RapZ-like family. RapZ subfamily. In terms of assembly, homotrimer.

Its function is as follows. Modulates the synthesis of GlmS, by affecting the processing and stability of the regulatory small RNA GlmZ. When glucosamine-6-phosphate (GlcN6P) concentrations are high in the cell, RapZ binds GlmZ and targets it to cleavage by RNase E. Consequently, GlmZ is inactivated and unable to activate GlmS synthesis. Under low GlcN6P concentrations, RapZ is sequestered and inactivated by an other regulatory small RNA, GlmY, preventing GlmZ degradation and leading to synthesis of GlmS. This chain is RNase adapter protein RapZ, found in Hamiltonella defensa subsp. Acyrthosiphon pisum (strain 5AT).